The primary structure comprises 138 residues: uncharacterized protein (138 aa).

Residues 1-35 (MVAPAARVFLRAVRAALTSTVPDLLCLLARGSPRG) form the signal peptide.

As to expression, isoform 1 is highly expressed in small intestine, testis and kidney, medium expressed in brain and heart and low expressed in colon; it could not be detected in liver, adrenal gland and pancreas.

The protein localises to the secreted. This is an uncharacterized protein from Homo sapiens (Human).